The sequence spans 308 residues: Methionyl-tRNA formyltransferase (308 aa).

Ser109–Pro112 provides a ligand contact to (6S)-5,6,7,8-tetrahydrofolate.

It belongs to the Fmt family.

It catalyses the reaction L-methionyl-tRNA(fMet) + (6R)-10-formyltetrahydrofolate = N-formyl-L-methionyl-tRNA(fMet) + (6S)-5,6,7,8-tetrahydrofolate + H(+). Its function is as follows. Attaches a formyl group to the free amino group of methionyl-tRNA(fMet). The formyl group appears to play a dual role in the initiator identity of N-formylmethionyl-tRNA by promoting its recognition by IF2 and preventing the misappropriation of this tRNA by the elongation apparatus. This chain is Methionyl-tRNA formyltransferase, found in Salinispora tropica (strain ATCC BAA-916 / DSM 44818 / JCM 13857 / NBRC 105044 / CNB-440).